A 1167-amino-acid polypeptide reads, in one-letter code: C5a peptidase (1167 aa).

The signal sequence occupies residues 1–31 (MRKKQKLPFDKLAIALMSTSILLNAQSDIKA). The span at 34 to 52 (VTEDTPVTEQAVETPQPTA) shows a compositional bias: polar residues. A disordered region spans residues 34–73 (VTEDTPVTEQAVETPQPTAVSEEVPSSKETKTPQTPDDAE). The Peptidase S8 domain maps to 99–581 (KATIRDLNDP…AGAVDAKKAS (483 aa)). Active-site charge relay system residues include D130, H193, and S512. The tract at residues 1029–1133 (EGHSNKPEQD…RDQLPTTNDK (105 aa)) is disordered. A run of 4 repeats spans residues 1034-1050 (KPEQ…KPEA), 1051-1067 (KPEQ…KPEA), 1068-1084 (KPEQ…KPET), and 1085-1101 (KPEK…TPQK). The interval 1034-1101 (KPEQDGSGQT…GQTPGKTPQK (68 aa)) is 4 X 17 AA tandem repeats. Basic and acidic residues-rich tracts occupy residues 1044-1071 (PDKK…KPEQ) and 1078-1090 (PDKK…EKDS). 2 stretches are compositionally biased toward polar residues: residues 1092–1106 (GQTP…QPSR) and 1120–1130 (KASTRDQLPTT). The short motif at 1127–1131 (LPTTN) is the LPXTG sorting signal element. T1130 is subject to Pentaglycyl murein peptidoglycan amidated threonine. Residues 1131–1167 (NDKDTNRLHLLKLVMTTFFFGLVAHIFKTKRQKETKK) constitute a propeptide, removed by sortase.

Belongs to the peptidase S8 family. Cleaved by SpeB protease; leading to its degradation. Degradation by SpeB is probably strictly regulated to preserve integrity of C5a peptidase.

The protein localises to the secreted. The protein resides in the cell wall. It catalyses the reaction The primary cleavage site is at 67-His-|-Lys-68 in human C5a with a minor secondary cleavage site at 58-Ala-|-Ser-59.. This virulence factor of S.pyogenes specifically cleaves the human serum chemotaxin C5a at '68-Lys-|-Asp-69' bond near its C-terminus, destroying its ability to serve as a chemoattractant. In Streptococcus pyogenes, this protein is C5a peptidase (scpA).